We begin with the raw amino-acid sequence, 188 residues long: Elongation factor P (188 aa).

Residue Lys34 is modified to N6-(3,6-diaminohexanoyl)-5-hydroxylysine.

It belongs to the elongation factor P family. In terms of processing, may be beta-lysylated on the epsilon-amino group of Lys-34 by the combined action of EpmA and EpmB, and then hydroxylated on the C5 position of the same residue by EpmC (if this protein is present). Lysylation is critical for the stimulatory effect of EF-P on peptide-bond formation. The lysylation moiety may extend toward the peptidyltransferase center and stabilize the terminal 3-CCA end of the tRNA. Hydroxylation of the C5 position on Lys-34 may allow additional potential stabilizing hydrogen-bond interactions with the P-tRNA.

It localises to the cytoplasm. It functions in the pathway protein biosynthesis; polypeptide chain elongation. Functionally, involved in peptide bond synthesis. Alleviates ribosome stalling that occurs when 3 or more consecutive Pro residues or the sequence PPG is present in a protein, possibly by augmenting the peptidyl transferase activity of the ribosome. Modification of Lys-34 is required for alleviation. In Yersinia pseudotuberculosis serotype O:1b (strain IP 31758), this protein is Elongation factor P.